The sequence spans 161 residues: UPF0225 protein HI_0277 (161 aa).

It belongs to the UPF0225 family.

The sequence is that of UPF0225 protein HI_0277 from Haemophilus influenzae (strain ATCC 51907 / DSM 11121 / KW20 / Rd).